Reading from the N-terminus, the 536-residue chain is GMP synthase [glutamine-hydrolyzing] (536 aa).

Residues 19–212 enclose the Glutamine amidotransferase type-1 domain; it reads RILILDFGSQ…VHEICDCAGS (194 aa). Cys-96 serves as the catalytic Nucleophile. Catalysis depends on residues His-186 and Glu-188. In terms of domain architecture, GMPS ATP-PPase spans 213–411; it reads WTPDNIIDMR…LGLPAKMINR (199 aa). 240 to 246 lines the ATP pocket; that stretch reads SGGVDSS.

As to quaternary structure, homodimer.

The enzyme catalyses XMP + L-glutamine + ATP + H2O = GMP + L-glutamate + AMP + diphosphate + 2 H(+). It functions in the pathway purine metabolism; GMP biosynthesis; GMP from XMP (L-Gln route): step 1/1. Its function is as follows. Catalyzes the synthesis of GMP from XMP. This Psychrobacter arcticus (strain DSM 17307 / VKM B-2377 / 273-4) protein is GMP synthase [glutamine-hydrolyzing].